Consider the following 287-residue polypeptide: GDT1-like protein C17G8.08c (287 aa).

7 helical membrane passes run 7-27 (WAII…GEGM), 50-70 (LIFS…FIVA), 89-109 (ALFI…LLFP), 112-132 (LTDI…LMEA), 194-214 (VMAT…FVSE), 232-252 (VYGV…LAVI), and 267-287 (MFIG…QGFF).

Belongs to the GDT1 family.

It is found in the membrane. The protein is GDT1-like protein C17G8.08c of Schizosaccharomyces pombe (strain 972 / ATCC 24843) (Fission yeast).